The chain runs to 1507 residues: DE-cadherin (1507 aa).

The first 69 residues, 1–69, serve as a signal peptide directing secretion; sequence MSTSVQRMSR…AISLLSPALA (69 aa). The propeptide occupies 70–261; that stretch reads LHSPPDKNFS…IYLKRPIDKR (192 aa). 7 consecutive Cadherin domains span residues 97-195, 204-301, 311-412, 420-522, 532-633, 631-733, and 741-835; these read VKEE…APAF, MSEN…PPSF, LKEN…IPYY, ILEN…KPHF, LLED…TILE, ILEE…APFL, and WQEN…NDNA. Residues 262–1328 lie on the Extracellular side of the membrane; it reads PGQSYAIIVR…VAFSFGIDRN (1067 aa). Residues Asn-317, Asn-466, and Asn-552 are each glycosylated (N-linked (GlcNAc...) asparagine). Residues Asn-766, Asn-949, Asn-983, Asn-999, and Asn-1073 are each glycosylated (N-linked (GlcNAc...) asparagine). The EGF-like domain maps to 1084-1123; sequence VQAQCVCEAPLMRRCLNGGSPRYGENDVCDCIDGFTGPHC. Intrachain disulfides connect Cys-1098/Cys-1112 and Cys-1114/Cys-1123. Residues 1125 to 1313 form the Laminin G-like domain; the sequence is LVSVAFYGSG…SVFRNIDSGC (189 aa). Asn-1145, Asn-1274, and Asn-1290 each carry an N-linked (GlcNAc...) asparagine glycan. Cys-1287 and Cys-1313 form a disulfide bridge. The chain crosses the membrane as a helical span at residues 1329–1349; the sequence is FIIAIIVCLALLLIILLAVVV. The Cytoplasmic segment spans residues 1350–1507; that stretch reads QKKQKNGWHE…NVDDDQGWRI (158 aa). The interaction with Inx2 stretch occupies residues 1350-1507; sequence QKKQKNGWHE…NVDDDQGWRI (158 aa). The segment at 1488–1507 is disordered; it reads YGEEPSDTDSNVDDDQGWRI. Residue Ser-1493 is modified to Phosphoserine.

As to quaternary structure, interacts (via cytoplasmic region) with Inx2 (via cytoplasmic loop). Interacts with Hakai. Interacts with Myo31DF. Post-translationally, N-glycosylation is important for biosynthesis and function. As to expression, in early stage 9 and stage 10 oocytes, expressed in border cells, strongly expressed in polar cells and very weakly expressed in the nurse cells (at protein level). In the embryo, expressed in the leading edge cells of the dorsal epidermis (at protein level). Stage 10 embryos exhibit intense expression in epithelial cells. Stage 14 embryos show expression in the hindgut (at the apical poles of cell-cell boundaries), at the apical junctions of tracheal cells and in the dorsal longitudinal trunk. In stage 16 embryos the glial midline cells of the central nervous system show strong expression.

It is found in the cell membrane. It localises to the apical cell membrane. Its function is as follows. Cadherins are calcium-dependent cell adhesion proteins. In connecting cells they preferentially interact with themselves in a homophilic manner; cadherins may thus contribute to the sorting of heterogeneous cell types. During oogenesis, integral component of the guidance mechanisms that regulate the directional persistent collective migration of the border cell (BC) cluster through the nurse cells to the oocyte. Functions downstream of the two chemoattractant receptors, Pvr and Egfr, to promote BC adhesion between the leader cells of the migrating cluster and the surrounding nurse cells. This adhesion increases Rac1 signaling in the leading cells, which in turn stabilizes DE-cadherin/DE-cadherin adhesions through the formation of forward-directed protrusions which attach/detach to the surrounding nurse cells in order to pull the cluster through the egg chamber to the oocyte. Within the BC cluster, also promotes adhesion between BCs, and between BCs and polar cells which enables the lead BC to communicate direction to the other cells in the cluster, providing polarity to each individual cell and ensuring collective behavior. May function in cell intercalation in the lateral epidermis during germband extension. Contributes to the determination of body left-right asymmetry by enhancing Myo31DF activity and inhibiting Myo61F activity. The sequence is that of DE-cadherin from Drosophila melanogaster (Fruit fly).